Here is a 105-residue protein sequence, read N- to C-terminus: Large ribosomal subunit protein uL24 (105 aa).

It belongs to the universal ribosomal protein uL24 family. In terms of assembly, part of the 50S ribosomal subunit.

Its function is as follows. One of two assembly initiator proteins, it binds directly to the 5'-end of the 23S rRNA, where it nucleates assembly of the 50S subunit. Functionally, one of the proteins that surrounds the polypeptide exit tunnel on the outside of the subunit. The sequence is that of Large ribosomal subunit protein uL24 from Wolbachia sp. subsp. Brugia malayi (strain TRS).